A 393-amino-acid chain; its full sequence is Chorismate synthase (393 aa).

Positions 40 and 46 each coordinate NADP(+). FMN is bound by residues Arg-129–Ser-131, Gln-251–Ala-252, Gly-301, Lys-316–Thr-320, and Arg-342.

The protein belongs to the chorismate synthase family. In terms of assembly, homotetramer. Requires FMNH2 as cofactor.

It catalyses the reaction 5-O-(1-carboxyvinyl)-3-phosphoshikimate = chorismate + phosphate. It participates in metabolic intermediate biosynthesis; chorismate biosynthesis; chorismate from D-erythrose 4-phosphate and phosphoenolpyruvate: step 7/7. Catalyzes the anti-1,4-elimination of the C-3 phosphate and the C-6 proR hydrogen from 5-enolpyruvylshikimate-3-phosphate (EPSP) to yield chorismate, which is the branch point compound that serves as the starting substrate for the three terminal pathways of aromatic amino acid biosynthesis. This reaction introduces a second double bond into the aromatic ring system. The polypeptide is Chorismate synthase (Koribacter versatilis (strain Ellin345)).